We begin with the raw amino-acid sequence, 312 residues long: Methionyl-tRNA formyltransferase (312 aa).

113–116 (SILP) provides a ligand contact to (6S)-5,6,7,8-tetrahydrofolate.

This sequence belongs to the Fmt family.

It carries out the reaction L-methionyl-tRNA(fMet) + (6R)-10-formyltetrahydrofolate = N-formyl-L-methionyl-tRNA(fMet) + (6S)-5,6,7,8-tetrahydrofolate + H(+). Functionally, attaches a formyl group to the free amino group of methionyl-tRNA(fMet). The formyl group appears to play a dual role in the initiator identity of N-formylmethionyl-tRNA by promoting its recognition by IF2 and preventing the misappropriation of this tRNA by the elongation apparatus. The protein is Methionyl-tRNA formyltransferase of Hydrogenovibrio crunogenus (strain DSM 25203 / XCL-2) (Thiomicrospira crunogena).